We begin with the raw amino-acid sequence, 418 residues long: Glucose-1-phosphate adenylyltransferase (418 aa).

Residues tyrosine 107, glycine 172, 187–188 (EK), and serine 205 contribute to the alpha-D-glucose 1-phosphate site.

Belongs to the bacterial/plant glucose-1-phosphate adenylyltransferase family. As to quaternary structure, homotetramer.

It carries out the reaction alpha-D-glucose 1-phosphate + ATP + H(+) = ADP-alpha-D-glucose + diphosphate. Its pathway is glycan biosynthesis; glycogen biosynthesis. Functionally, involved in the biosynthesis of ADP-glucose, a building block required for the elongation reactions to produce glycogen. Catalyzes the reaction between ATP and alpha-D-glucose 1-phosphate (G1P) to produce pyrophosphate and ADP-Glc. This is Glucose-1-phosphate adenylyltransferase from Gemmatimonas aurantiaca (strain DSM 14586 / JCM 11422 / NBRC 100505 / T-27).